A 523-amino-acid polypeptide reads, in one-letter code: NAD(P)H-quinone oxidoreductase subunit 2 (523 aa).

The next 14 helical transmembrane spans lie at 29–49, 57–77, 94–114, 123–143, 147–167, 182–202, 223–243, 255–275, 291–311, 317–337, 345–365, 389–409, 424–444, and 477–497; these read AIAP…VDLA, WVPP…AQQW, LAIS…LISW, PIGE…LLCG, LVSV…LAGY, LLVG…LYGL, AALS…AVPF, PTPV…ALAL, LLFT…ALAQ, MLAY…VCGT, VLYM…IILF, LGLS…GFFG, LLVV…ISVI, and IALV…NPLF.

It belongs to the complex I subunit 2 family. NDH-1 can be composed of about 15 different subunits; different subcomplexes with different compositions have been identified which probably have different functions.

Its subcellular location is the cellular thylakoid membrane. It carries out the reaction a plastoquinone + NADH + (n+1) H(+)(in) = a plastoquinol + NAD(+) + n H(+)(out). It catalyses the reaction a plastoquinone + NADPH + (n+1) H(+)(in) = a plastoquinol + NADP(+) + n H(+)(out). Its function is as follows. NDH-1 shuttles electrons from an unknown electron donor, via FMN and iron-sulfur (Fe-S) centers, to quinones in the respiratory and/or the photosynthetic chain. The immediate electron acceptor for the enzyme in this species is believed to be plastoquinone. Couples the redox reaction to proton translocation, and thus conserves the redox energy in a proton gradient. Cyanobacterial NDH-1 also plays a role in inorganic carbon-concentration. The chain is NAD(P)H-quinone oxidoreductase subunit 2 from Prochlorococcus marinus (strain MIT 9313).